The chain runs to 343 residues: 3-isopropylmalate dehydrogenase (343 aa).

Substrate contacts are provided by Arg-94, Arg-104, Arg-128, and Asp-218. Mg(2+)-binding residues include Asp-218, Asp-242, and Asp-246. Residue 278–290 (GSAPDIAGQNKAN) coordinates NAD(+).

The protein belongs to the isocitrate and isopropylmalate dehydrogenases family. LeuB type 2 subfamily. Homodimer. The cofactor is Mg(2+). Mn(2+) is required as a cofactor.

The protein localises to the cytoplasm. It carries out the reaction (2R,3S)-3-isopropylmalate + NAD(+) = 4-methyl-2-oxopentanoate + CO2 + NADH. It functions in the pathway amino-acid biosynthesis; L-leucine biosynthesis; L-leucine from 3-methyl-2-oxobutanoate: step 3/4. Its function is as follows. Catalyzes the oxidation of 3-carboxy-2-hydroxy-4-methylpentanoate (3-isopropylmalate) to 3-carboxy-4-methyl-2-oxopentanoate. The product decarboxylates to 4-methyl-2 oxopentanoate. In Bifidobacterium longum subsp. infantis (strain ATCC 15697 / DSM 20088 / JCM 1222 / NCTC 11817 / S12), this protein is 3-isopropylmalate dehydrogenase.